Here is a 313-residue protein sequence, read N- to C-terminus: Porphobilinogen deaminase (313 aa).

Cysteine 241 carries the post-translational modification S-(dipyrrolylmethanemethyl)cysteine.

This sequence belongs to the HMBS family. Monomer. Dipyrromethane is required as a cofactor.

It carries out the reaction 4 porphobilinogen + H2O = hydroxymethylbilane + 4 NH4(+). It functions in the pathway porphyrin-containing compound metabolism; protoporphyrin-IX biosynthesis; coproporphyrinogen-III from 5-aminolevulinate: step 2/4. The protein operates within porphyrin-containing compound metabolism; chlorophyll biosynthesis. Functionally, tetrapolymerization of the monopyrrole PBG into the hydroxymethylbilane pre-uroporphyrinogen in several discrete steps. This Chlorobium luteolum (strain DSM 273 / BCRC 81028 / 2530) (Pelodictyon luteolum) protein is Porphobilinogen deaminase.